The primary structure comprises 141 residues: Hemoglobin subunit alpha (141 aa).

Positions V1 to R141 constitute a Globin domain. Position 3 is a phosphoserine (S3). K7 bears the N6-succinyllysine mark. Position 8 is a phosphothreonine (T8). N6-succinyllysine is present on K11. K16 is subject to N6-acetyllysine; alternate. At K16 the chain carries N6-succinyllysine; alternate. Residue Y24 is modified to Phosphotyrosine. The residue at position 35 (S35) is a Phosphoserine. K40 carries the N6-succinyllysine modification. Residue S49 is modified to Phosphoserine. An O2-binding site is contributed by H58. Residue H87 coordinates heme b. Position 102 is a phosphoserine (S102). T108 carries the post-translational modification Phosphothreonine. A phosphoserine mark is found at S124 and S131. T134 and T137 each carry phosphothreonine. S138 is subject to Phosphoserine.

The protein belongs to the globin family. As to quaternary structure, heterotetramer of two alpha chains and two beta chains. In terms of tissue distribution, red blood cells.

In terms of biological role, involved in oxygen transport from the lung to the various peripheral tissues. Its function is as follows. Hemopressin acts as an antagonist peptide of the cannabinoid receptor CNR1. Hemopressin-binding efficiently blocks cannabinoid receptor CNR1 and subsequent signaling. The protein is Hemoglobin subunit alpha (HBA) of Taphozous georgianus (Sharp-nosed tomb bat).